We begin with the raw amino-acid sequence, 408 residues long: tRNA-specific 2-thiouridylase MnmA (408 aa).

Residues 27 to 34 and Leu53 contribute to the ATP site; that span reads AMSGGVDS. Cys121 acts as the Nucleophile in catalysis. Cys121 and Cys222 form a disulfide bridge. ATP is bound at residue Gly145. The interval 172 to 174 is interaction with tRNA; sequence RDQ. The active-site Cysteine persulfide intermediate is Cys222.

Belongs to the MnmA/TRMU family.

It localises to the cytoplasm. The catalysed reaction is S-sulfanyl-L-cysteinyl-[protein] + uridine(34) in tRNA + AH2 + ATP = 2-thiouridine(34) in tRNA + L-cysteinyl-[protein] + A + AMP + diphosphate + H(+). Catalyzes the 2-thiolation of uridine at the wobble position (U34) of tRNA, leading to the formation of s(2)U34. This chain is tRNA-specific 2-thiouridylase MnmA, found in Rhizobium johnstonii (strain DSM 114642 / LMG 32736 / 3841) (Rhizobium leguminosarum bv. viciae).